Reading from the N-terminus, the 153-residue chain is MVTFNCEVCNDTVPKKNTEKHYYRCPNAYYTCIDCSKTFEDGVSYKNHTSCISEDEKYQKALYKGNKKQKQKQQQKQQQKQHQHQPVATPAKKVEKPVIKKAEKVEKTSNGIELHKGKSLYKILKTMKDKGAKKTFLKSLVVDSEGQIRYAKE.

2 C2HC LYAR-type zinc fingers span residues 1 to 26 (MVTFNCEVCNDTVPKKNTEKHYYRCP) and 27 to 52 (NAYYTCIDCSKTFEDGVSYKNHTSCI). Zn(2+)-binding residues include cysteine 6, cysteine 9, histidine 21, cysteine 25, cysteine 32, cysteine 35, histidine 48, and cysteine 51. Positions 63-96 (YKGNKKQKQKQQQKQQQKQHQHQPVATPAKKVEK) are disordered. The span at 65–83 (GNKKQKQKQQQKQQQKQHQ) shows a compositional bias: basic residues.

It belongs to the UPF0743 family.

It is found in the nucleus. Its subcellular location is the nucleolus. The polypeptide is UPF0743 protein YCR087C-A (Saccharomyces cerevisiae (strain ATCC 204508 / S288c) (Baker's yeast)).